The chain runs to 124 residues: Fluoride-specific ion channel FluC (124 aa).

Transmembrane regions (helical) follow at residues 4–24 (VLFV…ISLL), 35–55 (FGTL…FALG), 62–82 (PEIK…FSTF), and 95–115 (LVKA…VVYL). Residues Gly74 and Thr77 each contribute to the Na(+) site.

It belongs to the fluoride channel Fluc/FEX (TC 1.A.43) family.

It is found in the cell inner membrane. The catalysed reaction is fluoride(in) = fluoride(out). Na(+) is not transported, but it plays an essential structural role and its presence is essential for fluoride channel function. Its function is as follows. Fluoride-specific ion channel. Important for reducing fluoride concentration in the cell, thus reducing its toxicity. This chain is Fluoride-specific ion channel FluC, found in Shewanella halifaxensis (strain HAW-EB4).